Reading from the N-terminus, the 462-residue chain is Zinc finger CCCH domain-containing protein 8 (462 aa).

6 C3H1-type zinc fingers span residues 105 to 133, 156 to 184, 209 to 237, 288 to 316, 367 to 395, and 422 to 450; these read RPGEKDCAFYMMTRTCKFGGSCKFDHPQW, QEGEPDCPFFMKTGKCKFGSKCKFNHPKE, RPSEPLCSFYAKTGKCKFRAMCKFNHPKD, RPGEVDCPFYMKMGSCKFGSTCRFNHPDR, RPGATVCDFYMKTGFCKFADRCKFHHPID, and REDAVVCAFYMKTGVCKFGMQCKFDHPPP.

The chain is Zinc finger CCCH domain-containing protein 8 from Oryza sativa subsp. japonica (Rice).